The sequence spans 156 residues: Small ribosomal subunit protein uS7 (156 aa).

Belongs to the universal ribosomal protein uS7 family. Part of the 30S ribosomal subunit. Contacts proteins S9 and S11.

Functionally, one of the primary rRNA binding proteins, it binds directly to 16S rRNA where it nucleates assembly of the head domain of the 30S subunit. Is located at the subunit interface close to the decoding center, probably blocks exit of the E-site tRNA. This Nitrosospira multiformis (strain ATCC 25196 / NCIMB 11849 / C 71) protein is Small ribosomal subunit protein uS7.